The sequence spans 507 residues: Chromosomal replication initiator protein DnaA (507 aa).

Residues 1-87 are domain I, interacts with DnaA modulators; sequence MSVELWQQCV…IGSKRSSAPR (87 aa). Low complexity predominate over residues 85-110; sequence APRAAPNAPLAAAQVSQAQANAAPAS. The interval 85 to 158 is disordered; it reads APRAAPNAPL…QQAPVRAEQR (74 aa). The segment at 87-170 is domain II; the sequence is RAAPNAPLAA…QVEGALKHTS (84 aa). The segment covering 126-140 has biased composition (basic and acidic residues); the sequence is QKTEEISEEPSRDSF. Residues 171–387 form a domain III, AAA+ region region; it reads YLNRTFTFEN…GALKRVIAHS (217 aa). Positions 215, 217, 218, and 219 each coordinate ATP. Positions 388–507 are domain IV, binds dsDNA; that stretch reads HFMGRDITIE…YKNLLRTLTT (120 aa).

The protein belongs to the DnaA family. Oligomerizes as a right-handed, spiral filament on DNA at oriC.

The protein resides in the cytoplasm. Its function is as follows. Plays an essential role in the initiation and regulation of chromosomal replication. ATP-DnaA binds to the origin of replication (oriC) to initiate formation of the DNA replication initiation complex once per cell cycle. Binds the DnaA box (a 9 base pair repeat at the origin) and separates the double-stranded (ds)DNA. Forms a right-handed helical filament on oriC DNA; dsDNA binds to the exterior of the filament while single-stranded (ss)DNA is stabiized in the filament's interior. The ATP-DnaA-oriC complex binds and stabilizes one strand of the AT-rich DNA unwinding element (DUE), permitting loading of DNA polymerase. After initiation quickly degrades to an ADP-DnaA complex that is not apt for DNA replication. Binds acidic phospholipids. The polypeptide is Chromosomal replication initiator protein DnaA (Pseudomonas fluorescens (strain Pf0-1)).